Reading from the N-terminus, the 257-residue chain is Histidine/lysine/arginine/ornithine transport ATP-binding protein HisP (257 aa).

The ABC transporter domain maps to 6-252 (LNVIDLHKRY…PQSPRLQRFL (247 aa)). ATP is bound by residues Ser40, Gly41, Gly43, Lys44, Ser45, and Thr46.

It belongs to the ABC transporter superfamily. The HisPMQJ complex is composed of two ATP-binding proteins (HisP), two transmembrane proteins (HisM and HisQ) and a solute-binding protein (HisJ). The HisPMQ-ArgT complex is composed of two ATP-binding proteins (HisP), two transmembrane proteins (HisM and HisQ) and a solute-binding protein (ArgT).

The protein localises to the cell inner membrane. It catalyses the reaction a polar amino acid(out) + ATP + H2O = a polar amino acid(in) + ADP + phosphate + H(+). The catalysed reaction is L-histidine(out) + ATP + H2O = L-histidine(in) + ADP + phosphate + H(+). It carries out the reaction L-lysine(out) + ATP + H2O = L-lysine(in) + ADP + phosphate + H(+). The enzyme catalyses L-arginine(out) + ATP + H2O = L-arginine(in) + ADP + phosphate + H(+). It catalyses the reaction L-ornithine(out) + ATP + H2O = L-ornithine(in) + ADP + phosphate + H(+). In terms of biological role, part of the ABC transporter complex HisPMQJ involved in histidine transport. Is also part of the ABC transporter complex HisPMQ-ArgT involved in lysine/arginine/ornithine transport. Shows ATPase activity. Responsible for energy coupling to the transport system. This Escherichia coli (strain K12) protein is Histidine/lysine/arginine/ornithine transport ATP-binding protein HisP.